The following is a 381-amino-acid chain: Acetylornithine deacetylase (381 aa).

H79 lines the Zn(2+) pocket. D81 is an active-site residue. D111 provides a ligand contact to Zn(2+). The active site involves E143. The Zn(2+) site is built by E144, E168, and H354.

This sequence belongs to the peptidase M20A family. ArgE subfamily. Homodimer. Zn(2+) is required as a cofactor. Co(2+) serves as cofactor. Requires glutathione as cofactor.

The protein resides in the cytoplasm. It carries out the reaction N(2)-acetyl-L-ornithine + H2O = L-ornithine + acetate. Its pathway is amino-acid biosynthesis; L-arginine biosynthesis; L-ornithine from N(2)-acetyl-L-ornithine (linear): step 1/1. Functionally, catalyzes the hydrolysis of the amide bond of N(2)-acetylated L-amino acids. Cleaves the acetyl group from N-acetyl-L-ornithine to form L-ornithine, an intermediate in L-arginine biosynthesis pathway, and a branchpoint in the synthesis of polyamines. The polypeptide is Acetylornithine deacetylase (Buchnera aphidicola subsp. Acyrthosiphon pisum (strain APS) (Acyrthosiphon pisum symbiotic bacterium)).